We begin with the raw amino-acid sequence, 543 residues long: ADIPOR-like receptor IZH3 (543 aa).

Residues 1-259 (MMDSSSKSLT…NWYGWHNETS (259 aa)) lie on the Lumenal side of the membrane. N-linked (GlcNAc...) asparagine glycosylation is found at Asn-45, Asn-123, Asn-153, and Asn-256. A helical transmembrane segment spans residues 260–280 (NIWSHLLGAIYIIYLAIYDFP). Residues 281-295 (QSEVWRNSQVPPQAR) are Cytoplasmic-facing. A helical membrane pass occupies residues 296 to 316 (WIVFMFLAAALKCMLSSVFWH). At 317 to 330 (TFNGTSFLKLRSKF) the chain is on the lumenal side. Residue Asn-319 is glycosylated (N-linked (GlcNAc...) asparagine). The chain crosses the membrane as a helical span at residues 331-353 (ACVDYSGITILITASILTTEFVT). The Cytoplasmic segment spans residues 354 to 357 (MYSC). A helical membrane pass occupies residues 358-378 (YWAMYTYMSISLALGVFGVFM). Residues 379–395 (NWSPRFDRPEARPLRIR) lie on the Lumenal side of the membrane. Residues 396–416 (FFILLATMGVLSFLHLIFLTD) form a helical membrane-spanning segment. Residues 417-425 (LHYAATLFS) are Cytoplasmic-facing. Residues 426–446 (PVTYKSVVWYLVGVVFYGSFI) form a helical membrane-spanning segment. Topologically, residues 447 to 505 (PERFRSDVQVDKTIPTNYELSTDLEIITKQREIHFREVPTAHSKCSSCPSHAKSFKSLW) are lumenal. A helical membrane pass occupies residues 506–526 (WVDYFGCSHTFWHFFVVLGVI). The Cytoplasmic segment spans residues 527-543 (GHYRAILDMFAKRWILS).

This sequence belongs to the ADIPOR family.

Its subcellular location is the endoplasmic reticulum membrane. ADIPOR-like receptor involved in zinc metabolism either by altering membrane sterol content or by directly altering cellular zinc levels. The protein is ADIPOR-like receptor IZH3 (IZH3) of Saccharomyces cerevisiae (strain ATCC 204508 / S288c) (Baker's yeast).